The primary structure comprises 119 residues: Protein TusC (119 aa).

The protein belongs to the DsrF/TusC family. Heterohexamer, formed by a dimer of trimers. The hexameric TusBCD complex contains 2 copies each of TusB, TusC and TusD. The TusBCD complex interacts with TusE.

The protein localises to the cytoplasm. Its function is as follows. Part of a sulfur-relay system required for 2-thiolation of 5-methylaminomethyl-2-thiouridine (mnm(5)s(2)U) at tRNA wobble positions. The chain is Protein TusC from Escherichia coli O127:H6 (strain E2348/69 / EPEC).